The chain runs to 345 residues: UDP-N-acetylenolpyruvoylglucosamine reductase (345 aa).

One can recognise an FAD-binding PCMH-type domain in the interval Val-16–Lys-185. Arg-162 is a catalytic residue. The active-site Proton donor is the Ser-231. Glu-328 is a catalytic residue.

This sequence belongs to the MurB family. It depends on FAD as a cofactor.

Its subcellular location is the cytoplasm. It carries out the reaction UDP-N-acetyl-alpha-D-muramate + NADP(+) = UDP-N-acetyl-3-O-(1-carboxyvinyl)-alpha-D-glucosamine + NADPH + H(+). It participates in cell wall biogenesis; peptidoglycan biosynthesis. Cell wall formation. The chain is UDP-N-acetylenolpyruvoylglucosamine reductase from Blochmanniella pennsylvanica (strain BPEN).